Reading from the N-terminus, the 546-residue chain is Flavin-dependent oxygenase ucdF (546 aa).

Positions 81 to 263 (QGRIPYYAVM…VNTTIRTFPD (183 aa)) constitute an FAD-binding PCMH-type domain.

It belongs to the oxygen-dependent FAD-linked oxidoreductase family.

In terms of biological role, nonribosomal peptide synthetase that mediates the biosynthesis of usterphenyllins and uscandidusins, p-terphenyl derivatives. The function of ucdF within the pathway still remains to be determined. UcdE further prenylates position C-14 of ring C of usterphenyllin B to form usterphenyllin A. The pathway begin with the biosynthesis of 4-hydroxyphenylpyruvate (HPPA) from L-tyrosine, possibly by the aminotransferase ucdG. The nonribosomal peptide synthetase ucdA then condenses two HPPA units to produce atromentin. The key step in this pathway is the reduction and dehydration of atromentin to form a terphenyl triol intermediate, performed by the NAD-dependent dehydrogenase ucdB. Further O-methylation by the methyltransferase ucdC forms terphenyllin carrying two methoxy moieties at C-9 and C-12, and subsequent dihydroxylation at C-3 of ring A and C-15 of ring C by the flavin-dependent oxygenase ucdD leads to 3,15-dihydroxyterphenyllin. Prenylation by ucdE at position C-5 of ring A forms usterphenyllin B, and is followed by a second prenylation at position C-14 of ring C to form usterphenyllin A. The following furan ring formation that leads to uscandidusins A and B was proven to be an unexpected spontaneous non-enzymatic reaction. This Aspergillus ustus protein is Flavin-dependent oxygenase ucdF.